The primary structure comprises 71 residues: Small ribosomal subunit protein bS21 (71 aa).

Over residues 48–59 (KAAAAVKRHAKK) the composition is skewed to basic residues. Positions 48–71 (KAAAAVKRHAKKVQREQRRRERLY) are disordered. A compositionally biased stretch (basic and acidic residues) spans 60–71 (VQREQRRRERLY).

Belongs to the bacterial ribosomal protein bS21 family.

In Azotobacter vinelandii (strain DJ / ATCC BAA-1303), this protein is Small ribosomal subunit protein bS21.